The primary structure comprises 594 residues: Putative phospholipase B-like 2 (594 aa).

An N-terminal signal peptide occupies residues 1–46; that stretch reads MAAPVDGSSGGWAARALRRALALTSLTTLALLASLTGLLLSGPAGA. 2 N-linked (GlcNAc...) asparagine glycosylation sites follow: N93 and N115. A disulfide bond links C147 and C157. N-linked (GlcNAc...) asparagine glycosylation is found at N236 and N441. An intrachain disulfide couples C497 to C500. N-linked (GlcNAc...) asparagine glycosylation is present at N520.

The protein belongs to the phospholipase B-like family. In terms of assembly, interacts with IGF2R. Post-translationally, the p76 protein is synthesized as a 76 kDa precursor which is then processed into a N-terminal 28 kDa form and a C-terminal 40 kDa form. The C-terminal peptide is further processed into a 15 kDa form. In terms of processing, glycosylated; contains mannose 6-phosphate sugars. Present at highest levels in spleen, lung and brain (at protein level).

The protein resides in the lysosome lumen. In terms of biological role, putative phospholipase. The sequence is that of Putative phospholipase B-like 2 (Plbd2) from Mus musculus (Mouse).